Consider the following 1488-residue polypeptide: Chromosome partition protein MukB (1488 aa).

34 to 41 is a binding site for ATP; sequence GGNGAGKS. 3 coiled-coil regions span residues 326 to 418, 444 to 472, and 509 to 602; these read LEAD…QYNQ, LDTF…QTAH, and RHLA…RRAP. A flexible hinge region spans residues 666–783; that stretch reads PGGAEDQRLN…SLPIFGRAAR (118 aa). Coiled-coil stretches lie at residues 835 to 923, 977 to 1116, and 1209 to 1265; these read EAEI…AKLE, EMLS…AKAG, and VEAI…LQSV. A disordered region spans residues 1049 to 1074; the sequence is ADSGAEERARQRRDELHAQLSNNRSR. A compositionally biased stretch (basic and acidic residues) spans 1051–1065; it reads SGAEERARQRRDELH.

Belongs to the SMC family. MukB subfamily. In terms of assembly, homodimerization via its hinge domain. Binds to DNA via its C-terminal region. Interacts, and probably forms a ternary complex, with MukE and MukF via its C-terminal region. The complex formation is stimulated by calcium or magnesium. Interacts with tubulin-related protein FtsZ.

The protein resides in the cytoplasm. Its subcellular location is the nucleoid. Plays a central role in chromosome condensation, segregation and cell cycle progression. Functions as a homodimer, which is essential for chromosome partition. Involved in negative DNA supercoiling in vivo, and by this means organize and compact chromosomes. May achieve or facilitate chromosome segregation by condensation DNA from both sides of a centrally located replisome during cell division. The sequence is that of Chromosome partition protein MukB from Salmonella agona (strain SL483).